The chain runs to 501 residues: ATP synthase subunit alpha (501 aa).

Residue 169 to 176 participates in ATP binding; sequence GDRQTGKT.

This sequence belongs to the ATPase alpha/beta chains family. As to quaternary structure, F-type ATPases have 2 components, CF(1) - the catalytic core - and CF(0) - the membrane proton channel. CF(1) has five subunits: alpha(3), beta(3), gamma(1), delta(1), epsilon(1). CF(0) has three main subunits: a(1), b(2) and c(9-12). The alpha and beta chains form an alternating ring which encloses part of the gamma chain. CF(1) is attached to CF(0) by a central stalk formed by the gamma and epsilon chains, while a peripheral stalk is formed by the delta and b chains.

The protein localises to the cell inner membrane. It catalyses the reaction ATP + H2O + 4 H(+)(in) = ADP + phosphate + 5 H(+)(out). Its function is as follows. Produces ATP from ADP in the presence of a proton gradient across the membrane. The alpha chain is a regulatory subunit. The chain is ATP synthase subunit alpha from Campylobacter jejuni subsp. jejuni serotype O:6 (strain 81116 / NCTC 11828).